A 538-amino-acid chain; its full sequence is Glutamyl-tRNA(Gln) amidotransferase subunit B, mitochondrial (538 aa).

This sequence belongs to the GatB/GatE family. GatB subfamily. Subunit of the heterotrimeric GatCAB amidotransferase (AdT) complex, composed of A, B and C subunits.

The protein resides in the mitochondrion. The catalysed reaction is L-glutamyl-tRNA(Gln) + L-glutamine + ATP + H2O = L-glutaminyl-tRNA(Gln) + L-glutamate + ADP + phosphate + H(+). Allows the formation of correctly charged Gln-tRNA(Gln) through the transamidation of misacylated Glu-tRNA(Gln) in the mitochondria. The reaction takes place in the presence of glutamine and ATP through an activated gamma-phospho-Glu-tRNA(Gln). The protein is Glutamyl-tRNA(Gln) amidotransferase subunit B, mitochondrial of Dictyostelium discoideum (Social amoeba).